A 132-amino-acid polypeptide reads, in one-letter code: Ribosome-binding factor A (132 aa).

The protein belongs to the RbfA family. Monomer. Binds 30S ribosomal subunits, but not 50S ribosomal subunits or 70S ribosomes.

It localises to the cytoplasm. In terms of biological role, one of several proteins that assist in the late maturation steps of the functional core of the 30S ribosomal subunit. Associates with free 30S ribosomal subunits (but not with 30S subunits that are part of 70S ribosomes or polysomes). Required for efficient processing of 16S rRNA. May interact with the 5'-terminal helix region of 16S rRNA. The sequence is that of Ribosome-binding factor A from Teredinibacter turnerae (strain ATCC 39867 / T7901).